The sequence spans 225 residues: NAD(P)H-quinone oxidoreductase subunit K, chloroplastic (225 aa).

[4Fe-4S] cluster contacts are provided by Cys-43, Cys-44, Cys-108, and Cys-139.

The protein belongs to the complex I 20 kDa subunit family. In terms of assembly, NDH is composed of at least 16 different subunits, 5 of which are encoded in the nucleus. The cofactor is [4Fe-4S] cluster.

Its subcellular location is the plastid. It is found in the chloroplast thylakoid membrane. It catalyses the reaction a plastoquinone + NADH + (n+1) H(+)(in) = a plastoquinol + NAD(+) + n H(+)(out). The catalysed reaction is a plastoquinone + NADPH + (n+1) H(+)(in) = a plastoquinol + NADP(+) + n H(+)(out). Functionally, NDH shuttles electrons from NAD(P)H:plastoquinone, via FMN and iron-sulfur (Fe-S) centers, to quinones in the photosynthetic chain and possibly in a chloroplast respiratory chain. The immediate electron acceptor for the enzyme in this species is believed to be plastoquinone. Couples the redox reaction to proton translocation, and thus conserves the redox energy in a proton gradient. This is NAD(P)H-quinone oxidoreductase subunit K, chloroplastic from Dioscorea elephantipes (Elephant's foot yam).